A 276-amino-acid polypeptide reads, in one-letter code: Myoblast determination protein 1 homolog 1 (276 aa).

Positions 84 to 135 (DRRKAATMRERRRLSKVNDAFETLKRCTSTNPNQRLPKVDILRNAISYIESL) constitute a bHLH domain. Residues 228–253 (CPAVQDGSEGSSPCSPGDGSIASENG) form a disordered region.

As to quaternary structure, efficient DNA binding requires dimerization with another bHLH protein.

It localises to the nucleus. Its function is as follows. May act as a transcriptional activator that promotes transcription of muscle-specific target genes and plays a role in muscle differentiation. The protein is Myoblast determination protein 1 homolog 1 (myod1) of Oncorhynchus mykiss (Rainbow trout).